The chain runs to 208 residues: Uracil phosphoribosyltransferase (208 aa).

5-phospho-alpha-D-ribose 1-diphosphate contacts are provided by residues Arg-78, Arg-103, and 130 to 138 (DPMLATGGS). Residues Ile-193 and 198 to 200 (GDA) contribute to the uracil site. Residue Asp-199 participates in 5-phospho-alpha-D-ribose 1-diphosphate binding.

The protein belongs to the UPRTase family. It depends on Mg(2+) as a cofactor.

The enzyme catalyses UMP + diphosphate = 5-phospho-alpha-D-ribose 1-diphosphate + uracil. The protein operates within pyrimidine metabolism; UMP biosynthesis via salvage pathway; UMP from uracil: step 1/1. Its activity is regulated as follows. Allosterically activated by GTP. Functionally, catalyzes the conversion of uracil and 5-phospho-alpha-D-ribose 1-diphosphate (PRPP) to UMP and diphosphate. This chain is Uracil phosphoribosyltransferase, found in Desulfovibrio desulfuricans (strain ATCC 27774 / DSM 6949 / MB).